The sequence spans 320 residues: HPr kinase/phosphorylase (320 aa).

Residues His-141 and Lys-162 contribute to the active site. Gly-156 to Ser-163 contributes to the ATP binding site. Position 163 (Ser-163) interacts with Mg(2+). Asp-180 (proton acceptor; for phosphorylation activity. Proton donor; for dephosphorylation activity) is an active-site residue. Positions Leu-204 to Asn-213 are important for the catalytic mechanism of both phosphorylation and dephosphorylation. Glu-205 is a binding site for Mg(2+). The active site involves Arg-248. An important for the catalytic mechanism of dephosphorylation region spans residues Pro-269–Arg-274.

Belongs to the HPrK/P family. In terms of assembly, homohexamer. The cofactor is Mg(2+).

It carries out the reaction [HPr protein]-L-serine + ATP = [HPr protein]-O-phospho-L-serine + ADP + H(+). The catalysed reaction is [HPr protein]-O-phospho-L-serine + phosphate + H(+) = [HPr protein]-L-serine + diphosphate. Its function is as follows. Catalyzes the ATP- as well as the pyrophosphate-dependent phosphorylation of a specific serine residue in HPr, a phosphocarrier protein of the phosphoenolpyruvate-dependent sugar phosphotransferase system (PTS). HprK/P also catalyzes the pyrophosphate-producing, inorganic phosphate-dependent dephosphorylation (phosphorolysis) of seryl-phosphorylated HPr (P-Ser-HPr). This is HPr kinase/phosphorylase from Neisseria meningitidis serogroup C / serotype 2a (strain ATCC 700532 / DSM 15464 / FAM18).